The following is a 341-amino-acid chain: L-threonine 3-dehydrogenase (341 aa).

Zn(2+) is bound at residue Cys38. Active-site charge relay system residues include Thr40 and His43. The Zn(2+) site is built by His63, Glu64, Cys93, Cys96, Cys99, and Cys107. Residues Ile175, Asp195, Arg200, 262–264 (LGI), and 286–287 (IY) contribute to the NAD(+) site.

This sequence belongs to the zinc-containing alcohol dehydrogenase family. As to quaternary structure, homotetramer. The cofactor is Zn(2+).

It localises to the cytoplasm. The enzyme catalyses L-threonine + NAD(+) = (2S)-2-amino-3-oxobutanoate + NADH + H(+). The protein operates within amino-acid degradation; L-threonine degradation via oxydo-reductase pathway; glycine from L-threonine: step 1/2. Its function is as follows. Catalyzes the NAD(+)-dependent oxidation of L-threonine to 2-amino-3-ketobutyrate. This is L-threonine 3-dehydrogenase from Klebsiella pneumoniae (strain 342).